Reading from the N-terminus, the 335-residue chain is Vitamin B12 import system permease protein BtuC (335 aa).

Helical transmembrane passes span 25 to 45 (LVVI…IWLW), 67 to 87 (LAVL…QALF), 95 to 114 (GLLG…VLLG), 118 to 140 (LPIW…LLLG), 153 to 173 (LLVG…AVYF), 200 to 220 (LVLA…VLNF), 243 to 263 (VLAI…ISFI), 286 to 306 (CALA…IALF), and 308 to 328 (AELP…IWLL).

Belongs to the binding-protein-dependent transport system permease family. FecCD subfamily. As to quaternary structure, the complex is composed of two ATP-binding proteins (BtuD), two transmembrane proteins (BtuC) and a solute-binding protein (BtuF).

The protein localises to the cell inner membrane. Functionally, part of the ABC transporter complex BtuCDF involved in vitamin B12 import. Involved in the translocation of the substrate across the membrane. This is Vitamin B12 import system permease protein BtuC from Yersinia enterocolitica serotype O:8 / biotype 1B (strain NCTC 13174 / 8081).